We begin with the raw amino-acid sequence, 708 residues long: Probable inactive lysine-specific demethylase JMJ19 (708 aa).

Residues 35 to 59 are disordered; the sequence is VPRDKESPRSVSRQEQTTGFGTDDK. Polar residues predominate over residues 43-54; the sequence is RSVSRQEQTTGF. One can recognise a JmjN domain in the interval 108-149; that stretch reads APVFNPTEEEFRDTLSYISSLRDRAEPYGICCVVPPPSWKPP. Residues 293 to 454 form the JmjC domain; sequence SSGWNLNSTA…HGDIAVQVNQ (162 aa). Positions 544, 547, 558, 560, 567, 570, 575, and 577 each coordinate Zn(2+). The RING-type; degenerate zinc-finger motif lies at 544-581; the sequence is CCVCLGDLYLSAVNCSCSANRYSCLNHMRKLCACPCDR. Residues 646-653 carry the Nuclear localization signal motif; it reads TRKDVAAG. A compositionally biased stretch (basic and acidic residues) spans 678–694; that stretch reads AKETLESCSKKSNRPCD. The interval 678–708 is disordered; sequence AKETLESCSKKSNRPCDNDSSEANAPKKQKQ.

The protein belongs to the JARID1 histone demethylase family. In terms of tissue distribution, expressed in inflorescences, roots, siliques, leaves and stems.

Its subcellular location is the nucleus. The protein is Probable inactive lysine-specific demethylase JMJ19 of Arabidopsis thaliana (Mouse-ear cress).